Here is a 69-residue protein sequence, read N- to C-terminus: MSELNTKTSPATNQAPGPEEKGKAGSAKKTEDEEEEIDIDLTAPETEKAALAIQGKFRRFQKRKKDPSS.

Polar residues predominate over residues 1 to 15 (MSELNTKTSPATNQA). The tract at residues 1–47 (MSELNTKTSPATNQAPGPEEKGKAGSAKKTEDEEEEIDIDLTAPETE) is disordered. Position 8 is a phosphothreonine (Thr8). Over residues 18 to 31 (PEEKGKAGSAKKTE) the composition is skewed to basic and acidic residues. Residues 46-69 (TEKAALAIQGKFRRFQKRKKDPSS) form the IQ domain.

Belongs to the PCP4 family.

The chain is Purkinje cell protein 4-like protein 1 (PCP4L1) from Bos taurus (Bovine).